The sequence spans 297 residues: ER membrane protein complex subunit 2 (297 aa).

Ala-2 carries the N-acetylalanine modification. TPR repeat units lie at residues 87-120, 155-188, and 192-225; these read HRVK…DPTN, QEAW…NPHN, and CQQY…NNRN. Residue Lys-255 is modified to N6-acetyllysine.

Belongs to the EMC2 family. In terms of assembly, component of the ER membrane protein complex (EMC). Interacts with WNK1 (via amphipathic alpha-helix region); promoting the ER membrane protein complex assembly by preventing EMC2 ubiquitination. Post-translationally, ubiquitinated when soluble in the cytoplasm, leading to its degradation by the proteasome. Interaction with EMC2 prevents its ubiquitination and degradation.

It localises to the endoplasmic reticulum membrane. Part of the endoplasmic reticulum membrane protein complex (EMC) that enables the energy-independent insertion into endoplasmic reticulum membranes of newly synthesized membrane proteins. Preferentially accommodates proteins with transmembrane domains that are weakly hydrophobic or contain destabilizing features such as charged and aromatic residues. Involved in the cotranslational insertion of multi-pass membrane proteins in which stop-transfer membrane-anchor sequences become ER membrane spanning helices. It is also required for the post-translational insertion of tail-anchored/TA proteins in endoplasmic reticulum membranes. By mediating the proper cotranslational insertion of N-terminal transmembrane domains in an N-exo topology, with translocated N-terminus in the lumen of the ER, controls the topology of multi-pass membrane proteins like the G protein-coupled receptors. By regulating the insertion of various proteins in membranes, it is indirectly involved in many cellular processes. The protein is ER membrane protein complex subunit 2 of Homo sapiens (Human).